The following is a 1374-amino-acid chain: Y' element ATP-dependent helicase YML133C (1374 aa).

The region spanning 375–552 is the Helicase ATP-binding domain; sequence EIYMADTPSV…LQRIGLTGLA (178 aa). 388-395 lines the ATP pocket; sequence APPGYGKT. In terms of domain architecture, Helicase C-terminal spans 609–758; it reads KLLLALFEIE…EFYGLESKKG (150 aa). The span at 832-975 shows a compositional bias: low complexity; the sequence is ANASTNATTN…ATTTESTNAS (144 aa). A disordered region spans residues 832-999; the sequence is ANASTNATTN…RFHPVTDINK (168 aa). The segment covering 976 to 999 has biased composition (basic and acidic residues); that stretch reads AKEDANKDGNAEDNRFHPVTDINK.

The protein belongs to the helicase family. Yeast subtelomeric Y' repeat subfamily.

Functionally, catalyzes DNA unwinding and is involved in telomerase-independent telomere maintenance. In Saccharomyces cerevisiae (strain ATCC 204508 / S288c) (Baker's yeast), this protein is Y' element ATP-dependent helicase YML133C.